The sequence spans 148 residues: Nucleoside diphosphate kinase 1 (148 aa).

Positions 9, 57, 85, 91, 102, and 112 each coordinate ATP. Residue histidine 115 is the Pros-phosphohistidine intermediate of the active site.

The protein belongs to the NDK family. Mg(2+) is required as a cofactor.

It carries out the reaction a 2'-deoxyribonucleoside 5'-diphosphate + ATP = a 2'-deoxyribonucleoside 5'-triphosphate + ADP. It catalyses the reaction a ribonucleoside 5'-diphosphate + ATP = a ribonucleoside 5'-triphosphate + ADP. Functionally, major role in the synthesis of nucleoside triphosphates other than ATP. The ATP gamma phosphate is transferred to the NDP beta phosphate via a ping-pong mechanism, using a phosphorylated active-site intermediate. The chain is Nucleoside diphosphate kinase 1 (NDKP1) from Mesembryanthemum crystallinum (Common ice plant).